The chain runs to 273 residues: Dermonecrotic toxin LapSicTox-alphaIB1aii (273 aa).

His-5 is a catalytic residue. 2 residues coordinate Mg(2+): Glu-25 and Asp-27. The active-site Nucleophile is the His-41. 2 disulfides stabilise this stretch: Cys-45–Cys-51 and Cys-47–Cys-190. Asp-85 serves as a coordination point for Mg(2+). Asn-250 carries an N-linked (GlcNAc...) asparagine glycan.

It belongs to the arthropod phospholipase D family. Class II subfamily. Mg(2+) serves as cofactor. In terms of tissue distribution, expressed by the venom gland.

The protein localises to the secreted. It carries out the reaction an N-(acyl)-sphingosylphosphocholine = an N-(acyl)-sphingosyl-1,3-cyclic phosphate + choline. The catalysed reaction is an N-(acyl)-sphingosylphosphoethanolamine = an N-(acyl)-sphingosyl-1,3-cyclic phosphate + ethanolamine. The enzyme catalyses a 1-acyl-sn-glycero-3-phosphocholine = a 1-acyl-sn-glycero-2,3-cyclic phosphate + choline. It catalyses the reaction a 1-acyl-sn-glycero-3-phosphoethanolamine = a 1-acyl-sn-glycero-2,3-cyclic phosphate + ethanolamine. Dermonecrotic toxins cleave the phosphodiester linkage between the phosphate and headgroup of certain phospholipids (sphingolipid and lysolipid substrates), forming an alcohol (often choline) and a cyclic phosphate. This toxin acts on sphingomyelin (SM). It may also act on ceramide phosphoethanolamine (CPE), lysophosphatidylcholine (LPC) and lysophosphatidylethanolamine (LPE), but not on lysophosphatidylserine (LPS), and lysophosphatidylglycerol (LPG). It acts by transphosphatidylation, releasing exclusively cyclic phosphate products as second products. Induces dermonecrosis, hemolysis, increased vascular permeability, edema, inflammatory response, and platelet aggregation. This is Dermonecrotic toxin LapSicTox-alphaIB1aii from Loxosceles apachea (Apache recluse spider).